The chain runs to 230 residues: Cytochrome c oxidase subunit 2 (230 aa).

Residues 1 to 14 are Mitochondrial intermembrane-facing; that stretch reads MAHPTQLGFQDAAS. The chain crosses the membrane as a helical span at residues 15-45; it reads PVMEELLHFHDHALMIVFLISTLVLYIIIAM. Over 46-59 the chain is Mitochondrial matrix; the sequence is VSTKLTNKYILDSQ. Residues 60 to 87 form a helical membrane-spanning segment; sequence EIEIVWTILPAVILVLIALPSLRILYLM. At 88 to 230 the chain is on the mitochondrial intermembrane side; sequence DEINDPHLTI…NWSSLMLEDA (143 aa). Residues histidine 161, cysteine 196, glutamate 198, cysteine 200, histidine 204, and methionine 207 each coordinate Cu cation. Position 198 (glutamate 198) interacts with Mg(2+).

This sequence belongs to the cytochrome c oxidase subunit 2 family. In terms of assembly, component of the cytochrome c oxidase (complex IV, CIV), a multisubunit enzyme composed of 14 subunits. The complex is composed of a catalytic core of 3 subunits MT-CO1, MT-CO2 and MT-CO3, encoded in the mitochondrial DNA, and 11 supernumerary subunits COX4I, COX5A, COX5B, COX6A, COX6B, COX6C, COX7A, COX7B, COX7C, COX8 and NDUFA4, which are encoded in the nuclear genome. The complex exists as a monomer or a dimer and forms supercomplexes (SCs) in the inner mitochondrial membrane with NADH-ubiquinone oxidoreductase (complex I, CI) and ubiquinol-cytochrome c oxidoreductase (cytochrome b-c1 complex, complex III, CIII), resulting in different assemblies (supercomplex SCI(1)III(2)IV(1) and megacomplex MCI(2)III(2)IV(2)). Found in a complex with TMEM177, COA6, COX18, COX20, SCO1 and SCO2. Interacts with TMEM177 in a COX20-dependent manner. Interacts with COX20. Interacts with COX16. It depends on Cu cation as a cofactor.

Its subcellular location is the mitochondrion inner membrane. It carries out the reaction 4 Fe(II)-[cytochrome c] + O2 + 8 H(+)(in) = 4 Fe(III)-[cytochrome c] + 2 H2O + 4 H(+)(out). In terms of biological role, component of the cytochrome c oxidase, the last enzyme in the mitochondrial electron transport chain which drives oxidative phosphorylation. The respiratory chain contains 3 multisubunit complexes succinate dehydrogenase (complex II, CII), ubiquinol-cytochrome c oxidoreductase (cytochrome b-c1 complex, complex III, CIII) and cytochrome c oxidase (complex IV, CIV), that cooperate to transfer electrons derived from NADH and succinate to molecular oxygen, creating an electrochemical gradient over the inner membrane that drives transmembrane transport and the ATP synthase. Cytochrome c oxidase is the component of the respiratory chain that catalyzes the reduction of oxygen to water. Electrons originating from reduced cytochrome c in the intermembrane space (IMS) are transferred via the dinuclear copper A center (CU(A)) of subunit 2 and heme A of subunit 1 to the active site in subunit 1, a binuclear center (BNC) formed by heme A3 and copper B (CU(B)). The BNC reduces molecular oxygen to 2 water molecules using 4 electrons from cytochrome c in the IMS and 4 protons from the mitochondrial matrix. The polypeptide is Cytochrome c oxidase subunit 2 (mt-co2) (Carassius auratus (Goldfish)).